The primary structure comprises 3424 residues: MSKKPGKSAAKRTVNMLKRLASVSPSRGRRTIRRMLDVRGAPRLILALMAFFRFAAIKPTLGLKKRWRSVNKTVAVKHLTNFKKELTTMLDSVNKRKEKKKSFSTALLWITMITAVAGLKISSHRDRPLLMVNKTDVSDAIPVPSVKGTNMCTIRALDVGYTCAYDTTYECPHLEVTMDPEDIDCWCTLESVYVNYGLCKQNHHVRRGRRAINIPHHGESHLENRATPWMDTTKTTKYLTKVENWVIRNPGYALVALATAWMLGSNTPQRVVFMIMMMLIAPAYSLNCLGISNRDFVEGLSGGTWVDIVLEGGSCVTVMAKDKPTLDIKLIRMEAKDLATVRSYCYQATVTDSSTEARCPTMGEAHNSKSLDASYVCKSSYVDRGWGNGCGLFGKGSIQTCVKFSCPGKATGKSIQRENLNYDVAVYVHGPISAAAHGNYTAQLTGKYAAKFSITPSAPTYTANLGEYGEATMECEPRAALDIDNYYVMSLNNKHWLVNRDWFHDLDLPWTGPATESWKNRESLIEFEEPHATRQTVVALGNQEGALHTALAGAIPVEVSSTTLTLNSGHLKCRLKLDKLKIKGTTYAMCKGTFAFAQTPVDTGHGTIVAELTYTGTDGPCKIPISMTADLRDMTPIGRLVTVNPIIPSSAKSQKILVELEPPFGSSFILVGQENNQIKYQWHKTGSTIGNALKTTWKGAQRFAVLGDTAWDFGSVGGIFNSIGKTIHGVFGTAFRSLFGGMSWVTQALMGALLLWLGISARERTVSLIMLSVGGILLFLAVNVHADTGCAIDMARRELKCGSGIFIHNDVETWRNNYKYHPLTPRGFAKVIQMSKDKGVCGIRSVGRLEHEMWEAIAPELNAIFEDNGVDLSVVVKGQTGIYKRAPKRLTETKDEMSFGWKNWGKSFIFSTETANSTFIVDGPESKECPTSDRAWNSLELEDFGFGIISTKIFLKVNEQRGNSCDSAVIGTAVKGNEAVHSDLGFWIQSTKNESWQLERAVLGEVKSCTWPESHTLWGDGVEESDLIIPITLAGPKSHHNMRPGYKTQTKGPWHEETPLVIEFAECPGTTVTQEESCGGRGPSIRTTTASGRTIRNWCCKNCTLPPLRFMAGENCWYGVEVRPKRENEETLIKSKVSAGNGQTIEPFQLGILMAFVFTQEVLRRRWTANLALPTSALLMACFIFGGFTYLDLFRYFILVGAAFAEANSGGDVVHLAMIAAFNIQPVALVTTFFRKNWTNRENMILIIAAACTQMACMELKIELFHVMNSLSLAWMILKALTTGTTSTLAMPFLAALSPPMNWLGLDVVRCLLIMAGVAALISERRESLAKKKGALLISAALALTGAFSPLVLQGALMFTQSLGKRGWPASEVLTAVGMTFALAGSVARLDGGTMAIPLATMAILAVAYVLSGKSTDMWLERCADISWINEAEITGTSPRLDVELDSNGDFKMINDPGVPMWMWTCRMGLMAMAAYNPVLIPVSMAGYWMTVKIHKRGGVMWDVPAPKQFGKTELKPGVYRVMTMGILGRYQSGVGVMWDGVFHTMWHVTQGAALRNGEGRLNPTWGSVRDDLISYGGKWKLSATWNGSEEVQMIAVEPGKAAKNYQTKPGVFKTPAGEIGAITLDFPKGTSGSPIINKAGEITGLYGNGIVLERGAYVSAITQGERQEEETPEAFTPDMLKKRRLTILDLHPGAGKTRRVIPQIVRECVKARLRTVILVPTRVVAAEMAEALRGLPIRYQTSAVKAEHSGNEIVDAMRHATLTQRLLTPAKVPNYNVFVMDEAHFTDPASIAARGYISTKVELGEAAAIFMTATPPGTTDPFPDSNAPIIDQEAEIPDRAWNSGFEWITEYTGKTVWFVPSVRMGNEIAMCLTKAGKKVIQLNRKSYDSEYQKCKGNDWDFVITTDISEMGANFGAHRVIDSRKCVKPVILDGDDRVLMNGPAPITPASAAQRRGRIGRDPTQSGDEYFYGGPTTTDDTGHAHWIEAKILLDNIQLQNGLVAQLYGPERDKVFTTDGEYRLRSEQKKNFVEFLRTGDLPVWLSYKVAEAGYAYTDRRWCFDGPANNTILEVRGDPEVWTRQGEKRILRPRWSDARVYCDNQALRSFKEFAAGKRSAGSVMEVMGRMPDYFWTKTLNAADNLYVLATANKGGRAHQAALEELPDTVETILLMTMMCVASLGMFTLMVHRRGLGKTGLGTLVLATVTVLLWISDVPAPKIAGVLLIAFLLMIVLIPEPEKQRSQTDNHLAIFLVCVLLLIGAVSANEMGWLETTKKDIGKLFRSSGDTQEQSTWQSWAPEVRAATAWAGYAGLTVFLTPLFRHLITTQYVSFSLTAITAQASALFGLSAGYPFVGIDLAVGFLLLGCYGQYNLPTAVATGLLLLAHYGYMIPGWQAEAMRAAQKRTAAGVMKNAVVDGIVATDIPEVDTATPITEKKLGQILLILLCGASLLVKFDTMVLVEAGVLTTSAMATLIEGNANTVWNSTVAVGVCHLMRGAWLAGPSIGWTIVRNLENPKLKRGGGSAPTLGEIWKAQLNQLTREEFMAYRRDGILEVDRTQARRARQSGITTGGHPVSRGTAKLRWMVERGFVRPIGKVVDLGCGRGGWSYYCATLRHVQEVRGYTKGGPGHEEPVMMQSYGWNIVTMKSGVDVFYKPTESCDTLLCDIGESSSSVGVEEARTLRVLDMVEPWLRAANSFCIKVLCPYTPKVIERLERLQRAYGGGLVRVPLSRNSTHEMYWVSGASSNIINAVTVTSQILVQRMNKGCRHGPRYEEDVCLGSGTRAVATQASPSDHTKIKHRLERLRKEFSATWHIDLEHPYRTWHYHGSYEVQPTGSANSMVNGVVRLLSKPWDAITSVVTMAMTDTTPFGQQRVFKEKVDTRAPDPAVGVAQALDITTGWLWTFLARSKKPRMCTREEFIAKVNSNAALGAVFDEQNQWSTAREAVEDPAFWNLVDEERKAHLAGRCETCIYNMMGKREKKLGEFGKAKGSRAIWYMWLGARFLEFEALGFLNEDHWMSRENSLGGVEGQGLQKLGYILRDISHLEGGNMFADDTAGWDTRITRADLENEAKVMNMMDGEHKQLAKAIIELTYRHKVVKVMRPARGGKTVMDIISREDQRGSGQVVTYALNTFTNLAAQLVRCMEGEELLTESDVHGLSPKKKQAVRNWLIQNGRERLSRMAVSGDDCVVKPIDDRFASALHFLNGMAKIRKDTQEWKPSVGWSNWQEVPFGSHHFNELLMKDGRTIVVPCRSQDELVGRARVSPGSGWSLRETACLSKAYAQMWLLMYFHRRDLRLMANAICSAVPVDWVPTGRTTWSIHGKGEWMTTEDMLQVWNRVWIEDNEHMEDKTPITSWTDIPYIGKREDQWCGSLIGTRQRATWAENIYTPIMQIRNLIGDEKYVDCMVSQHRFETPSPVLFTGAI.

Residues 2-15 form an interaction with host EXOC1 region; that stretch reads SKKPGKSAAKRTVN. Topologically, residues 2–101 are cytoplasmic; that stretch reads SKKPGKSAAK…SVNKRKEKKK (100 aa). Residues 35–70 are hydrophobic; homodimerization of capsid protein C; the sequence is MLDVRGAPRLILALMAFFRFAAIKPTLGLKKRWRSV. A propeptide spans 102-118 (ER anchor for the capsid protein C, removed in mature form by serine protease NS3); that stretch reads SFSTALLWITMITAVAG. A helical transmembrane segment spans residues 102-122; it reads SFSTALLWITMITAVAGLKIS. Over 123–244 the chain is Extracellular; sequence SHRDRPLLMV…TTKYLTKVEN (122 aa). Asn-133 carries N-linked (GlcNAc...) asparagine; by host glycosylation. Residues 245 to 265 traverse the membrane as a helical segment; it reads WVIRNPGYALVALATAWMLGS. The Cytoplasmic portion of the chain corresponds to 266–270; that stretch reads NTPQR. The chain crosses the membrane as a helical span at residues 271–285; the sequence is VVFMIMMMLIAPAYS. Residues 286-738 lie on the Extracellular side of the membrane; sequence LNCLGISNRD…GVFGTAFRSL (453 aa). Disulfide bonds link Cys-288/Cys-315, Cys-345/Cys-401, Cys-345/Cys-406, Cys-359/Cys-390, Cys-377/Cys-401, Cys-377/Cys-406, Cys-475/Cys-573, and Cys-590/Cys-621. The interval 383-396 is fusion peptide; sequence DRGWGNGCGLFGKG. A helical membrane pass occupies residues 739–759; it reads FGGMSWVTQALMGALLLWLGI. Residues 760–765 are Cytoplasmic-facing; the sequence is SARERT. Residues 766 to 786 form a helical membrane-spanning segment; it reads VSLIMLSVGGILLFLAVNVHA. Over 787–1170 the chain is Extracellular; the sequence is DTGCAIDMAR…EVLRRRWTAN (384 aa). 8 cysteine pairs are disulfide-bonded: Cys-790-Cys-801, Cys-841-Cys-929, Cys-965-Cys-1009, Cys-1067-Cys-1116, Cys-1078-Cys-1099, Cys-1078-Cys-1100, Cys-1099-Cys-1103, and Cys-1100-Cys-1103. Asn-916 and Asn-993 each carry an N-linked (GlcNAc...) asparagine; by host glycan. Residues 1171–1191 form a helical membrane-spanning segment; that stretch reads LALPTSALLMACFIFGGFTYL. Over 1192–1213 the chain is Cytoplasmic; sequence DLFRYFILVGAAFAEANSGGDV. A helical transmembrane segment spans residues 1214-1234; sequence VHLAMIAAFNIQPVALVTTFF. The Lumenal portion of the chain corresponds to 1235-1276; the sequence is RKNWTNRENMILIIAAACTQMACMELKIELFHVMNSLSLAWM. A helical membrane pass occupies residues 1277-1297; sequence ILKALTTGTTSTLAMPFLAAL. The Cytoplasmic segment spans residues 1298–1302; that stretch reads SPPMN. The chain crosses the membrane as a helical span at residues 1303–1323; it reads WLGLDVVRCLLIMAGVAALIS. Topologically, residues 1324-1333 are lumenal; that stretch reads ERRESLAKKK. A helical membrane pass occupies residues 1334–1354; the sequence is GALLISAALALTGAFSPLVLQ. At 1355–1367 the chain is on the cytoplasmic side; sequence GALMFTQSLGKRG. Residues 1368-1388 form a helical membrane-spanning segment; the sequence is WPASEVLTAVGMTFALAGSVA. Residues 1389–1391 are Lumenal-facing; the sequence is RLD. The helical transmembrane segment at 1392 to 1412 threads the bilayer; the sequence is GGTMAIPLATMAILAVAYVLS. Residues 1413-1469 are Cytoplasmic-facing; it reads GKSTDMWLERCADISWINEAEITGTSPRLDVELDSNGDFKMINDPGVPMWMWTCRMG. Residues 1420–1459 are interacts with and activates NS3 protease; that stretch reads LERCADISWINEAEITGTSPRLDVELDSNGDFKMINDPGV. The helical intramembrane region spans 1470-1490; it reads LMAMAAYNPVLIPVSMAGYWM. The Cytoplasmic portion of the chain corresponds to 1491-2167; that stretch reads TVKIHKRGGV…ALEELPDTVE (677 aa). Residues 1498 to 1675 enclose the Peptidase S7 domain; sequence GGVMWDVPAP…ERQEEETPEA (178 aa). Active-site charge relay system; for serine protease NS3 activity residues include His-1548, Asp-1572, and Ser-1632. The Helicase ATP-binding domain occupies 1678 to 1834; it reads PDMLKKRRLT…DSNAPIIDQE (157 aa). The important for RNA-binding stretch occupies residues 1682–1685; sequence KKRR. Position 1691-1698 (1691-1698) interacts with ATP; it reads LHPGAGKT. The DEAH box signature appears at 1782–1785; the sequence is DEAH. Residues 1845-2009 form the Helicase C-terminal domain; that stretch reads GFEWITEYTG…GLVAQLYGPE (165 aa). Residue Lys-1886 is modified to N6-acetyllysine; by host. Residues 1944 to 1969 are disordered; that stretch reads APITPASAAQRRGRIGRDPTQSGDEY. The interval 2160–2164 is regulates the ATPase activity of NS3 helicase; it reads EELPD. A helical membrane pass occupies residues 2168 to 2188; that stretch reads TILLMTMMCVASLGMFTLMVH. Residues 2189 to 2190 are Lumenal-facing; the sequence is RR. An intramembrane region (helical) is located at residues 2191 to 2211; that stretch reads GLGKTGLGTLVLATVTVLLWI. Topologically, residues 2212 to 2213 are lumenal; that stretch reads SD. The chain crosses the membrane as a helical span at residues 2214–2234; it reads VPAPKIAGVLLIAFLLMIVLI. The Cytoplasmic portion of the chain corresponds to 2235-2249; the sequence is PEPEKQRSQTDNHLA. A helical transmembrane segment spans residues 2250 to 2264; the sequence is IFLVCVLLLIGAVSA. Over 2265 to 2299 the chain is Lumenal; the sequence is NEMGWLETTKKDIGKLFRSSGDTQEQSTWQSWAPE. Positions 2300–2320 form an intramembrane region, helical; the sequence is VRAATAWAGYAGLTVFLTPLF. Residues 2321–2342 are Lumenal-facing; it reads RHLITTQYVSFSLTAITAQASA. Residues 2343-2363 traverse the membrane as a helical segment; the sequence is LFGLSAGYPFVGIDLAVGFLL. Over 2364–2371 the chain is Cytoplasmic; the sequence is LGCYGQYN. A helical membrane pass occupies residues 2372–2392; that stretch reads LPTAVATGLLLLAHYGYMIPG. Residues 2393 to 2439 lie on the Lumenal side of the membrane; that stretch reads WQAEAMRAAQKRTAAGVMKNAVVDGIVATDIPEVDTATPITEKKLGQ. The helical transmembrane segment at 2440-2460 threads the bilayer; it reads ILLILLCGASLLVKFDTMVLV. The Cytoplasmic portion of the chain corresponds to 2461-3424; that stretch reads EAGVLTTSAM…PSPVLFTGAI (964 aa). The mRNA cap 0-1 NS5-type MT domain maps to 2520 to 2784; that stretch reads GGGSAPTLGE…DVCLGSGTRA (265 aa). Ser-2575 contacts S-adenosyl-L-methionine. Ser-2575 carries the phosphoserine modification. Residue Lys-2580 is the For 2'-O-MTase activity of the active site. S-adenosyl-L-methionine is bound by residues Gly-2605, Trp-2606, Thr-2623, Lys-2624, Asp-2650, and Val-2651. Residue Asp-2665 is the For 2'-O-MTase activity of the active site. Ile-2666 contributes to the S-adenosyl-L-methionine binding site. Catalysis depends on for 2'-O-MTase activity residues Lys-2700 and Glu-2736. Tyr-2738 serves as a coordination point for S-adenosyl-L-methionine. Zn(2+) contacts are provided by Glu-2958, His-2962, Cys-2967, and Cys-2970. The region spanning 3048–3200 is the RdRp catalytic domain; sequence GNMFADDTAG…KPIDDRFASA (153 aa). Zn(2+) contacts are provided by His-3235, Cys-3251, and Cys-3370.

In the N-terminal section; belongs to the class I-like SAM-binding methyltransferase superfamily. mRNA cap 0-1 NS5-type methyltransferase family. In terms of assembly, homodimer. Interacts (via N-terminus) with host EXOC1 (via C-terminus); this interaction results in EXOC1 degradation through the proteasome degradation pathway. As to quaternary structure, forms heterodimers with envelope protein E in the endoplasmic reticulum and Golgi. Homodimer; in the endoplasmic reticulum and Golgi. Interacts with protein prM. Interacts with non-structural protein 1. In terms of assembly, homodimer; Homohexamer when secreted. Interacts with envelope protein E. NS1 interacts with NS4B. Interacts with host complement protein CFH; this interaction leads to the degradation of C3. As to quaternary structure, interacts (via N-terminus) with serine protease NS3. Forms a heterodimer with serine protease NS3. May form homooligomers. In terms of assembly, forms a heterodimer with NS2B. Interacts with non-structural protein 2A (via N-terminus). Interacts with NS4B. Interacts with unphosphorylated RNA-directed RNA polymerase NS5; this interaction stimulates RNA-directed RNA polymerase NS5 guanylyltransferase activity. As to quaternary structure, interacts with serine protease NS3. Homodimer. Interacts with host STAT2; this interaction inhibits the phosphorylation of the latter, and, when all viral proteins are present (polyprotein), targets STAT2 for degradation. Interacts with serine protease NS3. In terms of processing, specific enzymatic cleavages in vivo yield mature proteins. Cleavages in the lumen of endoplasmic reticulum are performed by host signal peptidase, whereas cleavages in the cytoplasmic side are performed by serine protease NS3. Signal cleavage at the 2K-4B site requires a prior NS3 protease-mediated cleavage at the 4A-2K site. Post-translationally, cleaved in post-Golgi vesicles by a host furin, releasing the mature small envelope protein M, and peptide pr. This cleavage is incomplete as up to 30% of viral particles still carry uncleaved prM. N-glycosylated. In terms of processing, N-glycosylated. The excreted form is glycosylated and this is required for efficient secretion of the protein from infected cells. Post-translationally, acetylated by host KAT5. Acetylation modulates NS3 RNA-binding and unwinding activities and plays an important positive role for viral replication. Phosphorylated on serines residues. This phosphorylation may trigger NS5 nuclear localization.

The protein localises to the virion. The protein resides in the host nucleus. Its subcellular location is the host cytoplasm. It is found in the host perinuclear region. It localises to the secreted. The protein localises to the virion membrane. The protein resides in the host endoplasmic reticulum membrane. It carries out the reaction Selective hydrolysis of -Xaa-Xaa-|-Yaa- bonds in which each of the Xaa can be either Arg or Lys and Yaa can be either Ser or Ala.. The enzyme catalyses RNA(n) + a ribonucleoside 5'-triphosphate = RNA(n+1) + diphosphate. The catalysed reaction is a ribonucleoside 5'-triphosphate + H2O = a ribonucleoside 5'-diphosphate + phosphate + H(+). It catalyses the reaction ATP + H2O = ADP + phosphate + H(+). It carries out the reaction a 5'-end (5'-triphosphoguanosine)-ribonucleoside in mRNA + S-adenosyl-L-methionine = a 5'-end (N(7)-methyl 5'-triphosphoguanosine)-ribonucleoside in mRNA + S-adenosyl-L-homocysteine. The enzyme catalyses a 5'-end (N(7)-methyl 5'-triphosphoguanosine)-ribonucleoside in mRNA + S-adenosyl-L-methionine = a 5'-end (N(7)-methyl 5'-triphosphoguanosine)-(2'-O-methyl-ribonucleoside) in mRNA + S-adenosyl-L-homocysteine + H(+). Functionally, plays a role in virus budding by binding to the cell membrane and gathering the viral RNA into a nucleocapsid that forms the core of a mature virus particle. During virus entry, may induce genome penetration into the host cytoplasm after hemifusion induced by the surface proteins. Can migrate to the cell nucleus where it modulates host functions. Overcomes the anti-viral effects of host EXOC1 by sequestering and degrading the latter through the proteasome degradation pathway. In terms of biological role, inhibits RNA silencing by interfering with host Dicer. Prevents premature fusion activity of envelope proteins in trans-Golgi by binding to envelope protein E at pH6.0. After virion release in extracellular space, gets dissociated from E dimers. Its function is as follows. Acts as a chaperone for envelope protein E during intracellular virion assembly by masking and inactivating envelope protein E fusion peptide. prM is the only viral peptide matured by host furin in the trans-Golgi network probably to avoid catastrophic activation of the viral fusion activity in acidic Golgi compartment prior to virion release. prM-E cleavage is inefficient, and many virions are only partially matured. These uncleaved prM would play a role in immune evasion. Functionally, may play a role in virus budding. Exerts cytotoxic effects by activating a mitochondrial apoptotic pathway through M ectodomain. May display a viroporin activity. In terms of biological role, binds to host cell surface receptor and mediates fusion between viral and cellular membranes. Envelope protein is synthesized in the endoplasmic reticulum in the form of heterodimer with protein prM. They play a role in virion budding in the ER, and the newly formed immature particle is covered with 60 spikes composed of heterodimer between precursor prM and envelope protein E. The virion is transported to the Golgi apparatus where the low pH causes dissociation of PrM-E heterodimers and formation of E homodimers. prM-E cleavage is inefficient, and many virions are only partially matured. These uncleaved prM would play a role in immune evasion. Involved in immune evasion, pathogenesis and viral replication. Once cleaved off the polyprotein, is targeted to three destinations: the viral replication cycle, the plasma membrane and the extracellular compartment. Essential for viral replication. Required for formation of the replication complex and recruitment of other non-structural proteins to the ER-derived membrane structures. Excreted as a hexameric lipoparticle that plays a role against host immune response. Antagonizing the complement function. Binds to the host macrophages and dendritic cells. Inhibits signal transduction originating from Toll-like receptor 3 (TLR3). Its function is as follows. Component of the viral RNA replication complex that functions in virion assembly and antagonizes the host alpha/beta interferon antiviral response. Functionally, required cofactor for the serine protease function of NS3. May have membrane-destabilizing activity and form viroporins. In terms of biological role, displays three enzymatic activities: serine protease, NTPase and RNA helicase. NS3 serine protease, in association with NS2B, performs its autocleavage and cleaves the polyprotein at dibasic sites in the cytoplasm: C-prM, NS2A-NS2B, NS2B-NS3, NS3-NS4A, NS4A-2K and NS4B-NS5. NS3 RNA helicase binds RNA and unwinds dsRNA in the 3' to 5' direction. Regulates the ATPase activity of the NS3 helicase activity. NS4A allows NS3 helicase to conserve energy during unwinding. Its function is as follows. Functions as a signal peptide for NS4B and is required for the interferon antagonism activity of the latter. Functionally, induces the formation of ER-derived membrane vesicles where the viral replication takes place. Inhibits interferon (IFN)-induced host STAT1 phosphorylation and nuclear translocation, thereby preventing the establishment of cellular antiviral state by blocking the IFN-alpha/beta pathway. Inhibits STAT2 translocation in the nucleus after IFN-alpha treatment. In terms of biological role, replicates the viral (+) and (-) RNA genome, and performs the capping of genomes in the cytoplasm. NS5 methylates viral RNA cap at guanine N-7 and ribose 2'-O positions. Besides its role in RNA genome replication, also prevents the establishment of cellular antiviral state by blocking the interferon-alpha/beta (IFN-alpha/beta) signaling pathway. Inhibits host TYK2 and STAT2 phosphorylation, thereby preventing activation of JAK-STAT signaling pathway. The polypeptide is Genome polyprotein (Aedes sp. (Human)).